The primary structure comprises 302 residues: MFRLTRLSNKPILSPIKEHEWEKEAVFNAAVIYEGNKFHLFYRASNNKFVLNTEKPEEKYKFVSSIGYAVSEDGINFERFDKPVLVGEIPQEAWGVEDPRITKIDNKYYMLYTGFGGRDWLDFRICMVWSDDLKNWKGHRIVLDEPNKDAALLSEKINGKYVLFHRRMPDIWIAYSDDLVNWYNHKIIMSPKSHTWESKKIGIAGPPIKREDGWLLIYHGVDNNNVYRLGVALLDLKDPSKVIARQKEPILEPELDWEINGLVPNVVFSCGAVEVNDMYYVYYGAADTHIGVAVIEKEKVKF.

The protein belongs to the glycosyl hydrolase 130 family. In terms of assembly, monomer.

The catalysed reaction is beta-D-mannopyranosyl-(1-&gt;2)-D-mannopyranose + phosphate = alpha-D-mannose 1-phosphate + D-mannose. The protein operates within nucleotide-sugar biosynthesis; GDP-alpha-D-mannose biosynthesis. Probably involved in a salvage pathway for GDP-D-mannose biosynthesis. Catalyzes the reversible phosphorolysis of 1,2-beta-oligomannan. In phosphorolytic reactions, prefers beta-1,2-mannobiose (beta-1,2-Man2) as substrate. Produces alpha-D-mannose 1-phosphate, which is the precursor of GDP-D-mannose. The sequence is that of Beta-1,2-mannobiose phosphorylase from Thermoanaerobacter sp. (strain X514).